The chain runs to 702 residues: Polyribonucleotide nucleotidyltransferase (702 aa).

The Mg(2+) site is built by Asp-493 and Asp-499. The 61-residue stretch at 559 to 619 folds into the KH domain; sequence PKVEIFNVDP…NLISQSKEYI (61 aa). The region spanning 643–702 is the S1 motif domain; sequence GEEFLGRVQKVVEFGVFVELKEGVDGLLHNSKIKEKLEVGHEIKVKVAEIKNGKVSLDLA.

The protein belongs to the polyribonucleotide nucleotidyltransferase family. Mg(2+) is required as a cofactor.

The protein resides in the cytoplasm. It catalyses the reaction RNA(n+1) + phosphate = RNA(n) + a ribonucleoside 5'-diphosphate. Involved in mRNA degradation. Catalyzes the phosphorolysis of single-stranded polyribonucleotides processively in the 3'- to 5'-direction. The protein is Polyribonucleotide nucleotidyltransferase of Campylobacter lari (strain RM2100 / D67 / ATCC BAA-1060).